Consider the following 401-residue polypeptide: Golgi membrane protein 1 (401 aa).

Position 1 is an N-acetylmethionine (methionine 1). The Cytoplasmic segment spans residues 1-12 (MMGLGNGRRSMK). Residues 13–35 (SPPLVLAALVACIIVLGFNYWIA) traverse the membrane as a helical; Signal-anchor for type II membrane protein segment. The Lumenal portion of the chain corresponds to 36–401 (SSRSVDLQTR…DQREKRNHTL (366 aa)). Residues 40 to 205 (VDLQTRIMEL…QRQQLQALSE (166 aa)) are a coiled coil. Residue asparagine 109 is glycosylated (N-linked (GlcNAc...) (complex) asparagine). Asparagine 144 carries N-linked (GlcNAc...) asparagine glycosylation. The segment at 178-401 (TKKGNEAVAS…DQREKRNHTL (224 aa)) is disordered. Phosphoserine is present on serine 187. A compositionally biased stretch (polar residues) spans 228 to 238 (LGNSKSQTPAP). Composition is skewed to basic and acidic residues over residues 244–255 (LDSKRQVEKEET) and 264–285 (EPQR…DRPV). The segment covering 286–295 (GGRGFGGAGE) has biased composition (gly residues). Residues 298–312 (QTPQVQAALSVSQEN) show a composition bias toward polar residues. Serine 309 is modified (phosphoserine; by FAM20C). Positions 350-360 (DYNMDENEAES) are enriched in acidic residues. Over residues 381–395 (EDQKRDTINLLDQRE) the composition is skewed to basic and acidic residues. N-linked (GlcNAc...) asparagine glycosylation is present at asparagine 398.

The protein belongs to the GOLM family. As to quaternary structure, interacts with DYM. In terms of processing, glycosylated. Phosphorylation sites are present in the extracellular medium. As to expression, widely expressed. Highly expressed in colon, prostate, trachea and stomach. Expressed at lower level in testis, muscle, lymphoid tissues, white blood cells and spleen. Predominantly expressed by cells of the epithelial lineage. Expressed at low level in normal liver. Expression significantly increases in virus (HBV, HCV) infected liver. Expression does not increase in liver disease due to non-viral causes (alcohol-induced liver disease, autoimmune hepatitis). Increased expression in hepatocytes appears to be a general feature of advanced liver disease. In liver tissue from patients with adult giant-cell hepatitis (GCH), it is strongly expressed in hepatocytes-derived syncytial giant cells. Constitutively expressed by biliary epithelial cells but not by hepatocytes.

The protein resides in the golgi apparatus. It localises to the cis-Golgi network membrane. Functionally, unknown. Cellular response protein to viral infection. The chain is Golgi membrane protein 1 (GOLM1) from Homo sapiens (Human).